Consider the following 260-residue polypeptide: NAD-capped RNA hydrolase NudC (260 aa).

R74 is a substrate binding site. Residues C103, C106, C121, and C124 each contribute to the Zn(2+) site. Position 129 (Y129) interacts with substrate. One can recognise a Nudix hydrolase domain in the interval 130–253; the sequence is PRIFPCIIVA…TIARALIEQT (124 aa). Positions 163, 179, and 183 each coordinate a divalent metal cation. A Nudix box motif is present at residues 164–185; that stretch reads GFLEAGETLEDCVAREVHEETG. 197 to 204 provides a ligand contact to substrate; that stretch reads QPWAFPSS. Position 224 (E224) interacts with a divalent metal cation. Residue A246 coordinates substrate.

This sequence belongs to the Nudix hydrolase family. NudC subfamily. As to quaternary structure, homodimer. The cofactor is Mg(2+). Requires Mn(2+) as cofactor. Zn(2+) is required as a cofactor.

The catalysed reaction is a 5'-end NAD(+)-phospho-ribonucleoside in mRNA + H2O = a 5'-end phospho-adenosine-phospho-ribonucleoside in mRNA + beta-nicotinamide D-ribonucleotide + 2 H(+). It catalyses the reaction NAD(+) + H2O = beta-nicotinamide D-ribonucleotide + AMP + 2 H(+). The enzyme catalyses NADH + H2O = reduced beta-nicotinamide D-ribonucleotide + AMP + 2 H(+). Functionally, mRNA decapping enzyme that specifically removes the nicotinamide adenine dinucleotide (NAD) cap from a subset of mRNAs by hydrolyzing the diphosphate linkage to produce nicotinamide mononucleotide (NMN) and 5' monophosphate mRNA. The NAD-cap is present at the 5'-end of some mRNAs and stabilizes RNA against 5'-processing. Has preference for mRNAs with a 5'-end purine. Catalyzes the hydrolysis of a broad range of dinucleotide pyrophosphates. The polypeptide is NAD-capped RNA hydrolase NudC (Vibrio parahaemolyticus serotype O3:K6 (strain RIMD 2210633)).